Here is a 503-residue protein sequence, read N- to C-terminus: Putative ribose/galactose/methyl galactoside import ATP-binding protein (503 aa).

ABC transporter domains are found at residues L7–E244 and V254–L498. An ATP-binding site is contributed by G39–S46.

This sequence belongs to the ABC transporter superfamily. Carbohydrate importer 2 (CUT2) (TC 3.A.1.2) family.

The protein resides in the cell membrane. It catalyses the reaction D-ribose(out) + ATP + H2O = D-ribose(in) + ADP + phosphate + H(+). The enzyme catalyses D-galactose(out) + ATP + H2O = D-galactose(in) + ADP + phosphate + H(+). Functionally, part of an ABC transporter complex involved in carbohydrate import. Could be involved in ribose, galactose and/or methyl galactoside import. Responsible for energy coupling to the transport system. The polypeptide is Putative ribose/galactose/methyl galactoside import ATP-binding protein (Geobacillus kaustophilus (strain HTA426)).